Here is a 395-residue protein sequence, read N- to C-terminus: Nickel and cobalt resistance protein CnrB (395 aa).

Residues 13 to 33 (MIAGVAAVAAAVGFGAAHLPV) traverse the membrane as a helical segment. The disordered stretch occupies residues 35–55 (EKSPASTQAPEAQKPQSAPVK). Polar residues predominate over residues 37-50 (SPASTQAPEAQKPQ). Residues 140 to 193 (AAERKVAQAKADLARKTYEREASLFQQGVTPRQEMEAAKAALDVAQAEALRAAT) are a coiled coil.

This sequence belongs to the membrane fusion protein (MFP) (TC 8.A.1) family.

It localises to the cell inner membrane. The products of the genes cnrA, cnrB, and cnrC are likely to form a membrane-bound protein complex catalyzing an energy-dependent efflux of Ni(2+) and Co(2+). The mechanism of action of the CnrCBA complex may be that of a proton/cation antiporter. In Cupriavidus metallidurans (strain ATCC 43123 / DSM 2839 / NBRC 102507 / CH34) (Ralstonia metallidurans), this protein is Nickel and cobalt resistance protein CnrB (cnrB).